A 61-amino-acid polypeptide reads, in one-letter code: Small ribosomal subunit protein uS14 (61 aa).

Residues cysteine 24, cysteine 27, cysteine 40, and cysteine 43 each contribute to the Zn(2+) site.

It belongs to the universal ribosomal protein uS14 family. Zinc-binding uS14 subfamily. As to quaternary structure, part of the 30S ribosomal subunit. Contacts proteins S3 and S10. Requires Zn(2+) as cofactor.

Functionally, binds 16S rRNA, required for the assembly of 30S particles and may also be responsible for determining the conformation of the 16S rRNA at the A site. The protein is Small ribosomal subunit protein uS14 of Rhodopirellula baltica (strain DSM 10527 / NCIMB 13988 / SH1).